We begin with the raw amino-acid sequence, 204 residues long: Proteasome subunit beta type-2-A (204 aa).

At Met1 the chain carries N-acetylmethionine.

Belongs to the peptidase T1B family. As to quaternary structure, component of the 20S core complex of the 26S proteasome. The 26S proteasome is composed of a core protease (CP), known as the 20S proteasome, capped at one or both ends by the 19S regulatory particle (RP/PA700). The 20S proteasome core is composed of 28 subunits that are arranged in four stacked rings, resulting in a barrel-shaped structure. The two end rings are each formed by seven alpha subunits, and the two central rings are each formed by seven beta subunits. The catalytic chamber with the active sites is on the inside of the barrel.

Its subcellular location is the cytoplasm. It is found in the nucleus. In terms of biological role, non-catalytic component of the proteasome, a multicatalytic proteinase complex which is characterized by its ability to cleave peptides with Arg, Phe, Tyr, Leu, and Glu adjacent to the leaving group at neutral or slightly basic pH. The proteasome has an ATP-dependent proteolytic activity. The protein is Proteasome subunit beta type-2-A (PBD1) of Arabidopsis thaliana (Mouse-ear cress).